We begin with the raw amino-acid sequence, 969 residues long: MSFALGQRWISDTESDLGLGTVVALDARTVTLMFAASEENRVYARSDAPVTRVIFNVGDVVDSQQGWSLQVEQVVEDQGVYTYLGTRVDTEESGVALREIFLSNQIRFNKPQDKLFAGQIDRMDNFVLRYRALTNQYQQHKSPMRGLCGMRAGLIPHQLYIAHEVGRRHAPRVLLADEVGLGKTIEAGMIIHQQVLTGRAERILIVVPETLQHQWLVEMMRRFNLHFSIFDEERCVEAFSEADNPFETQQYVLCSLDFLRKSRQRFEQALEAEWDLLVVDEAHHLEWHPEKPSREYQVIEALAEQTPGVLLLTATPEQLGRESHFARLRLLDADRFYDYEAFVKEEEQYAPVADAVTALFSGEKLSDEAKNKITELLSEQDVEPLFKALESHASEDEIALARQELIDNLMDRHGTGRVLFRNTRAAIKGFPVRNVHLLPLEIPSQYTTSMRVAGMLGGKLTPEARAMKMLYPEEIFQEFEGEESSWWQFDSRVNWLLEKVKAKRSEKILVIASRASTALQLEQALREREGIRATVFHEGMSIIERDKAAAYFAQEEGGAQVLICSEIGSEGRNFQFANQLVMFDLPFNPDLLEQRIGRLDRIGQKRDIDVYVPYLTETSQAILARWFQEGLNAFAETCPTGRAVYDAFAERLIPILAAGGGEELEVIIEESAKLNKTLKSQLEVGRDRLLEMHSNGGEKAQQIAEQIAKTDGDTNLVTFALSLFDAIGLHQEDRGENALVVTPAEHMMVPSYPGLPYEGATITFDRDTALSREDMHFISWEHPMVQGGIDLLMSEGVGTCAVSLLKNKALPVGTILLELVYVVDAQAPKRSGISRFLPVSPIRILMDARGNDLSSQVEFESFNRQLSPVNRHLASKLVSSVQHDVHRLITASETAVEPRVSAIREQAQRDMQQSLNSELERLLALKAVNPNIRDEEIEVLDQQIKELTGYIAQAQYQLDSLRLIVVAHN.

Residues 164–334 (EVGRRHAPRV…FARLRLLDAD (171 aa)) form the Helicase ATP-binding domain. Residue 177-184 (DEVGLGKT) coordinates ATP. A DEAH box motif is present at residues 280-283 (DEAH). The Helicase C-terminal domain maps to 492–646 (RVNWLLEKVK…TCPTGRAVYD (155 aa)).

The protein belongs to the SNF2/RAD54 helicase family. RapA subfamily. As to quaternary structure, interacts with the RNAP. Has a higher affinity for the core RNAP than for the holoenzyme. Its ATPase activity is stimulated by binding to RNAP.

Functionally, transcription regulator that activates transcription by stimulating RNA polymerase (RNAP) recycling in case of stress conditions such as supercoiled DNA or high salt concentrations. Probably acts by releasing the RNAP, when it is trapped or immobilized on tightly supercoiled DNA. Does not activate transcription on linear DNA. Probably not involved in DNA repair. The polypeptide is RNA polymerase-associated protein RapA (Vibrio cholerae serotype O1 (strain ATCC 39315 / El Tor Inaba N16961)).